The following is a 429-amino-acid chain: Enolase (429 aa).

Residue Q166 participates in (2R)-2-phosphoglycerate binding. E208 (proton donor) is an active-site residue. 3 residues coordinate Mg(2+): D245, E289, and D316. (2R)-2-phosphoglycerate-binding residues include K341, R370, S371, and K392. K341 functions as the Proton acceptor in the catalytic mechanism.

This sequence belongs to the enolase family. Component of the RNA degradosome, a multiprotein complex involved in RNA processing and mRNA degradation. Mg(2+) is required as a cofactor.

Its subcellular location is the cytoplasm. The protein resides in the secreted. The protein localises to the cell surface. The catalysed reaction is (2R)-2-phosphoglycerate = phosphoenolpyruvate + H2O. It participates in carbohydrate degradation; glycolysis; pyruvate from D-glyceraldehyde 3-phosphate: step 4/5. In terms of biological role, catalyzes the reversible conversion of 2-phosphoglycerate (2-PG) into phosphoenolpyruvate (PEP). It is essential for the degradation of carbohydrates via glycolysis. The protein is Enolase of Acinetobacter baumannii (strain AB307-0294).